The primary structure comprises 323 residues: Acetyl-coenzyme A carboxylase carboxyl transferase subunit alpha 1 (323 aa).

Residues 39–293 (RLSKKSQQLT…RRALGDSLRQ (255 aa)) form the CoA carboxyltransferase C-terminal domain.

The protein belongs to the AccA family. As to quaternary structure, acetyl-CoA carboxylase is a heterohexamer composed of biotin carboxyl carrier protein (AccB), biotin carboxylase (AccC) and two subunits each of ACCase subunit alpha (AccA) and ACCase subunit beta (AccD).

The protein localises to the cytoplasm. The enzyme catalyses N(6)-carboxybiotinyl-L-lysyl-[protein] + acetyl-CoA = N(6)-biotinyl-L-lysyl-[protein] + malonyl-CoA. Its pathway is lipid metabolism; malonyl-CoA biosynthesis; malonyl-CoA from acetyl-CoA: step 1/1. Component of the acetyl coenzyme A carboxylase (ACC) complex. First, biotin carboxylase catalyzes the carboxylation of biotin on its carrier protein (BCCP) and then the CO(2) group is transferred by the carboxyltransferase to acetyl-CoA to form malonyl-CoA. In terms of biological role, does not confer resistance to the endogenous polyketide antibiotic thailandamide, does not confer resistance to thailandamide when expressed in S.typhimurium. The chain is Acetyl-coenzyme A carboxylase carboxyl transferase subunit alpha 1 from Burkholderia thailandensis (strain ATCC 700388 / DSM 13276 / CCUG 48851 / CIP 106301 / E264).